Reading from the N-terminus, the 393-residue chain is NAD(P)H-quinone oxidoreductase subunit H, chloroplastic (393 aa).

This sequence belongs to the complex I 49 kDa subunit family. As to quaternary structure, NDH is composed of at least 16 different subunits, 5 of which are encoded in the nucleus.

Its subcellular location is the plastid. The protein resides in the chloroplast thylakoid membrane. It carries out the reaction a plastoquinone + NADH + (n+1) H(+)(in) = a plastoquinol + NAD(+) + n H(+)(out). The catalysed reaction is a plastoquinone + NADPH + (n+1) H(+)(in) = a plastoquinol + NADP(+) + n H(+)(out). Functionally, NDH shuttles electrons from NAD(P)H:plastoquinone, via FMN and iron-sulfur (Fe-S) centers, to quinones in the photosynthetic chain and possibly in a chloroplast respiratory chain. The immediate electron acceptor for the enzyme in this species is believed to be plastoquinone. Couples the redox reaction to proton translocation, and thus conserves the redox energy in a proton gradient. This chain is NAD(P)H-quinone oxidoreductase subunit H, chloroplastic, found in Helianthus annuus (Common sunflower).